Here is a 245-residue protein sequence, read N- to C-terminus: Nicotinamide/nicotinic acid mononucleotide adenylyltransferase 3 (245 aa).

The NAD(+) site is built by Ser14 and Phe15. ATP is bound by residues His22 and Lys56. Trp90, Thr93, Gly134, and Asp136 together coordinate NAD(+). Position 139 (Lys139) interacts with ATP. Residues Leu146, Trp147, Arg166, and Asn197 each contribute to the NAD(+) site. ATP is bound at residue 202 to 205; that stretch reads TYVR.

The protein belongs to the eukaryotic NMN adenylyltransferase family. Homotetramer. The cofactor is Mg(2+).

The protein localises to the mitochondrion. The catalysed reaction is beta-nicotinamide D-ribonucleotide + ATP + H(+) = diphosphate + NAD(+). The enzyme catalyses nicotinate beta-D-ribonucleotide + ATP + H(+) = deamido-NAD(+) + diphosphate. Its pathway is cofactor biosynthesis; NAD(+) biosynthesis; NAD(+) from nicotinamide D-ribonucleotide: step 1/1. It functions in the pathway cofactor biosynthesis; NAD(+) biosynthesis; deamido-NAD(+) from nicotinate D-ribonucleotide: step 1/1. Activity is strongly inhibited by galotannin. Inhibited by P1-(adenosine-5')-P4-(nicotinic-acid-riboside-5')-tetraphosphate (Nap4AD). In terms of biological role, catalyzes the formation of NAD(+) from nicotinamide mononucleotide (NMN) and ATP. Can also use the deamidated form; nicotinic acid mononucleotide (NaMN) as substrate with the same efficiency. Can use triazofurin monophosphate (TrMP) as substrate. Can also use GTP and ITP as nucleotide donors. Also catalyzes the reverse reaction, i.e. the pyrophosphorolytic cleavage of NAD(+). For the pyrophosphorolytic activity, can use NAD(+), NADH, NaAD, nicotinic acid adenine dinucleotide phosphate (NHD), nicotinamide guanine dinucleotide (NGD) as substrates. Fails to cleave phosphorylated dinucleotides NADP(+), NADPH and NaADP(+). Protects against axonal degeneration following injury. May be involved in the maintenance of axonal integrity. Also functions as a stress-response chaperone protein that prevents toxic aggregation of proteins; this function may be independent of its NAD(+) synthesis activity. The polypeptide is Nicotinamide/nicotinic acid mononucleotide adenylyltransferase 3 (Mus musculus (Mouse)).